A 449-amino-acid polypeptide reads, in one-letter code: N-succinylarginine dihydrolase (449 aa).

Substrate is bound by residues 19 to 28 (GGLSYGNVAS), Asn110, and 137 to 138 (HR). The segment at 23–43 (YGNVASQSNSQQGSNPREAAR) is disordered. The segment covering 25-37 (NVASQSNSQQGSN) has biased composition (polar residues). Glu174 is a catalytic residue. Arg214 is a substrate binding site. The active site involves His250. Asp252 and Asn365 together coordinate substrate. Cys371 functions as the Nucleophile in the catalytic mechanism.

Belongs to the succinylarginine dihydrolase family. Homodimer.

The enzyme catalyses N(2)-succinyl-L-arginine + 2 H2O + 2 H(+) = N(2)-succinyl-L-ornithine + 2 NH4(+) + CO2. Its pathway is amino-acid degradation; L-arginine degradation via AST pathway; L-glutamate and succinate from L-arginine: step 2/5. In terms of biological role, catalyzes the hydrolysis of N(2)-succinylarginine into N(2)-succinylornithine, ammonia and CO(2). The sequence is that of N-succinylarginine dihydrolase from Pseudomonas entomophila (strain L48).